The chain runs to 673 residues: Armadillo repeat-containing protein 8 (673 aa).

14 ARM repeats span residues 51-92, 95-134, 138-176, 178-217, 225-265, 269-309, 313-352, 374-413, 416-455, 458-497, 501-540, 543-585, 588-627, and 634-673; these read NKQK…SLSM, ENNIKSLVDCHIIPALLQGLLCSDLIFIEACLRCLRTVFI, TPVQLLYTDPTVIPHLMSLLSRSQHTQEYITQIFAHCCK, PEHQTVLFNHGAIQNIAPLLISPSYKVRMQALKCFSVLAY, TLVN…YMCR, IRTE…YLME, ELQRIASVTDHLVSMLADYFKYPSSVSAITDIKRLDHDLK, DIRKKITETENMMDRIVSGLSESSIKVRLAAVRCLHSLSR, QQLRTSFHDHAVWKPLMKLLQNAPDEVLVMASSTLCNLLL, SPSKEPILESGVIELLCSLTQSDSSALRVNGIWALMNMAF, QKVKVEIVRALGTEQLFRLLSDPDTNVLMKTLGLLRNLLS, PHID…NIAD, TAKELIMTDDDMLQKIKYYMGHSNVKLQLAATFCISNLIW, and QERQDKLREMGFVDILHKLTQASDPDLCDRAKTAMQQYLA.

As to quaternary structure, identified in the CTLH complex that contains at least MAEA, RMND5A (or alternatively its paralog RMND5B), GID8, WDR26, and RANBP9 and/or RANBP10; ARMC8 has an ancillary role in the complex.

It is found in the nucleus. The protein resides in the cytoplasm. Component of the CTLH E3 ubiquitin-protein ligase complex that mediates ubiquitination and subsequent proteasomal degradation of target proteins. This is Armadillo repeat-containing protein 8 (armc8) from Danio rerio (Zebrafish).